The following is a 1304-amino-acid chain: Probable inactive serine/threonine-protein kinase fnkC (1304 aa).

The Protein kinase domain maps to 33–402 (FEIIRILKKD…TNLLLTHKFI (370 aa)). ATP is bound by residues 39-47 (LKKDEFSTT) and lysine 68. The disordered stretch occupies residues 208-277 (KDNNNNNNNN…EAEGGGGGGE (70 aa)). The segment covering 210–269 (NNNNNNNNNNNNNNNNNNNNNNNNNNNNNNANNSNNNTLNNLSIVNNNSSSSSNDNSSEA) has biased composition (low complexity). FNIP repeat units follow at residues 514-556 (HSKS…LGSD), 710-753 (FNQL…FGRC), 754-797 (FNQP…FGSQ), 798-841 (YNQP…FGES), and 900-943 (YNDI…FGCD). MATH domains lie at 1025 to 1154 (QGSW…RIDA) and 1172 to 1291 (NQAF…NVSI).

Belongs to the protein kinase superfamily. STE Ser/Thr protein kinase family.

The protein is Probable inactive serine/threonine-protein kinase fnkC (fnkC) of Dictyostelium discoideum (Social amoeba).